A 1578-amino-acid chain; its full sequence is FERM and PDZ domain-containing protein 1 (1578 aa).

One can recognise a PDZ domain in the interval 57-135 (TVKIDKDTLL…SLSITVVRCT (79 aa)). An FERM domain is found at 181-496 (NVLKLYLENG…GYYRLLVDPV (316 aa)). 3 disordered regions span residues 555–616 (KEEQ…EEDD), 720–743 (SDSSESTASRQGGAPPAWGQQGWT), and 759–831 (PLAF…VKKY). Positions 720 to 729 (SDSSESTASR) are enriched in polar residues. Low complexity predominate over residues 730–742 (QGGAPPAWGQQGW). Over residues 793–811 (AEPSATSLQNKASTSSPEN) the composition is skewed to polar residues. The span at 822–831 (PSRRGGVKKY) shows a compositional bias: basic residues. Residues 924-931 (EPETMETK) form an important for interaction with GPSM2 region. Disordered stretches follow at residues 950 to 1030 (PNNK…LASN), 1070 to 1194 (KYTE…QGCQ), and 1347 to 1374 (PQPETEEEDRDLEAHPMAPLTSPPSAGS). Residues 968–986 (TPHCSNPGSSGPDTAQARP) show a composition bias toward polar residues. Basic and acidic residues predominate over residues 1100 to 1117 (TKEEPQGQLSLERDREVT). Positions 1139–1150 (DVSNNVSQTLDI) are enriched in polar residues.

Interacts with GPSM1. Interacts with GPSM2 (via TPR repeat region).

It is found in the cytoplasm. The protein localises to the cytosol. It localises to the cell membrane. Functionally, stabilizes membrane-bound GPSM1, and thereby promotes its interaction with GNAI1. In Homo sapiens (Human), this protein is FERM and PDZ domain-containing protein 1 (FRMPD1).